The sequence spans 509 residues: UDP-N-acetylmuramoyl-L-alanyl-D-glutamate--2,6-diaminopimelate ligase (509 aa).

Ser32 contributes to the UDP-N-acetyl-alpha-D-muramoyl-L-alanyl-D-glutamate binding site. 117 to 123 (GTNGKTT) contributes to the ATP binding site. UDP-N-acetyl-alpha-D-muramoyl-L-alanyl-D-glutamate-binding positions include 159–160 (TT), Ser186, Gln192, and Arg194. The residue at position 226 (Lys226) is an N6-carboxylysine. Meso-2,6-diaminopimelate contacts are provided by residues Arg401, 425–428 (DNPR), Gly476, and Glu480. A Meso-diaminopimelate recognition motif motif is present at residues 425–428 (DNPR).

This sequence belongs to the MurCDEF family. MurE subfamily. Mg(2+) serves as cofactor. In terms of processing, carboxylation is probably crucial for Mg(2+) binding and, consequently, for the gamma-phosphate positioning of ATP.

Its subcellular location is the cytoplasm. The catalysed reaction is UDP-N-acetyl-alpha-D-muramoyl-L-alanyl-D-glutamate + meso-2,6-diaminopimelate + ATP = UDP-N-acetyl-alpha-D-muramoyl-L-alanyl-gamma-D-glutamyl-meso-2,6-diaminopimelate + ADP + phosphate + H(+). The protein operates within cell wall biogenesis; peptidoglycan biosynthesis. Its function is as follows. Catalyzes the addition of meso-diaminopimelic acid to the nucleotide precursor UDP-N-acetylmuramoyl-L-alanyl-D-glutamate (UMAG) in the biosynthesis of bacterial cell-wall peptidoglycan. The chain is UDP-N-acetylmuramoyl-L-alanyl-D-glutamate--2,6-diaminopimelate ligase from Prochlorococcus marinus (strain NATL1A).